The sequence spans 269 residues: Gem-associated protein 2 (269 aa).

Ser70 and Ser155 each carry phosphoserine.

The protein belongs to the gemin-2 family. In terms of assembly, monomer. Part of the core SMN complex that contains SMN1, GEMIN2/SIP1, DDX20/GEMIN3, GEMIN4, GEMIN5, GEMIN6, GEMIN7, GEMIN8 and STRAP/UNRIP. Part of the SMN-Sm complex that contains SMN1, GEMIN2/SIP1, DDX20/GEMIN3, GEMIN4, GEMIN5, GEMIN6, GEMIN7, GEMIN8, STRAP/UNRIP and the Sm proteins SNRPB, SNRPD1, SNRPD2, SNRPD3, SNRPE, SNRPF and SNRPG. Interacts with GEMIN5; the interaction is direct. Interacts (via C-terminus) with SMN1; the interaction is direct. Interacts with SNRPD1; the interaction is direct. Interacts with SNRPD2; the interaction is direct. Interacts (via N-terminus) with SNRPF; the interaction is direct. Interacts (via N-terminus) with SNRPE; the interaction is direct. Interacts (via N-terminus) with SNRPG; the interaction is direct.

It localises to the nucleus. Its subcellular location is the gem. The protein localises to the cytoplasm. The SMN complex catalyzes the assembly of small nuclear ribonucleoproteins (snRNPs), the building blocks of the spliceosome, and thereby plays an important role in the splicing of cellular pre-mRNAs. Most spliceosomal snRNPs contain a common set of Sm proteins SNRPB, SNRPD1, SNRPD2, SNRPD3, SNRPE, SNRPF and SNRPG that assemble in a heptameric protein ring on the Sm site of the small nuclear RNA to form the core snRNP (Sm core). In the cytosol, the Sm proteins SNRPD1, SNRPD2, SNRPE, SNRPF and SNRPG (5Sm) are trapped in an inactive 6S pICln-Sm complex by the chaperone CLNS1A that controls the assembly of the core snRNP. To assemble core snRNPs, the SMN complex accepts the trapped 5Sm proteins from CLNS1A. Binding of snRNA inside 5Sm ultimately triggers eviction of the SMN complex, thereby allowing binding of SNRPD3 and SNRPB to complete assembly of the core snRNP. Within the SMN complex, GEMIN2 constrains the conformation of 5Sm, thereby promoting 5Sm binding to snRNA containing the snRNP code (a nonameric Sm site and a 3'-adjacent stem-loop), thus preventing progression of assembly until a cognate substrate is bound. This is Gem-associated protein 2 from Mus musculus (Mouse).